The chain runs to 379 residues: Ribosomal RNA small subunit methyltransferase H (379 aa).

Residues 71-73, glutamate 90, aspartate 157, and histidine 164 each bind S-adenosyl-L-methionine; that span reads GGH.

The protein belongs to the methyltransferase superfamily. RsmH family.

The protein localises to the cytoplasm. The catalysed reaction is cytidine(1402) in 16S rRNA + S-adenosyl-L-methionine = N(4)-methylcytidine(1402) in 16S rRNA + S-adenosyl-L-homocysteine + H(+). Specifically methylates the N4 position of cytidine in position 1402 (C1402) of 16S rRNA. This is Ribosomal RNA small subunit methyltransferase H from Treponema pallidum (strain Nichols).